Here is a 737-residue protein sequence, read N- to C-terminus: Catalase-peroxidase (737 aa).

A signal peptide spans 1–23 (MLKKILPVLITLAIVHNTPTAWA). The tryptophyl-tyrosyl-methioninium (Trp-Tyr) (with M-249) cross-link spans 102–223 (WHGAGTYRIY…LAATQMGLIY (122 aa)). Residue His-103 is the Proton acceptor of the active site. A cross-link (tryptophyl-tyrosyl-methioninium (Tyr-Met) (with W-102)) is located at residues 223–249 (YVNPEGPNGKPDPVAAAKDIREAFARM). His-264 serves as a coordination point for heme b.

It belongs to the peroxidase family. Peroxidase/catalase subfamily. As to quaternary structure, homodimer or homotetramer. The cofactor is heme b. Post-translationally, formation of the three residue Trp-Tyr-Met cross-link is important for the catalase, but not the peroxidase activity of the enzyme.

The catalysed reaction is H2O2 + AH2 = A + 2 H2O. It carries out the reaction 2 H2O2 = O2 + 2 H2O. In terms of biological role, bifunctional enzyme with both catalase and broad-spectrum peroxidase activity. In Yersinia pseudotuberculosis serotype I (strain IP32953), this protein is Catalase-peroxidase.